The sequence spans 142 residues: Large ribosomal subunit protein uL11 (142 aa).

The protein belongs to the universal ribosomal protein uL11 family. As to quaternary structure, part of the ribosomal stalk of the 50S ribosomal subunit. Interacts with L10 and the large rRNA to form the base of the stalk. L10 forms an elongated spine to which L12 dimers bind in a sequential fashion forming a multimeric L10(L12)X complex. One or more lysine residues are methylated.

Forms part of the ribosomal stalk which helps the ribosome interact with GTP-bound translation factors. This chain is Large ribosomal subunit protein uL11, found in Haemophilus influenzae (strain PittGG).